The chain runs to 349 residues: S-adenosylmethionine:tRNA ribosyltransferase-isomerase (349 aa).

Belongs to the QueA family. Monomer.

It localises to the cytoplasm. It catalyses the reaction 7-aminomethyl-7-carbaguanosine(34) in tRNA + S-adenosyl-L-methionine = epoxyqueuosine(34) in tRNA + adenine + L-methionine + 2 H(+). Its pathway is tRNA modification; tRNA-queuosine biosynthesis. In terms of biological role, transfers and isomerizes the ribose moiety from AdoMet to the 7-aminomethyl group of 7-deazaguanine (preQ1-tRNA) to give epoxyqueuosine (oQ-tRNA). This chain is S-adenosylmethionine:tRNA ribosyltransferase-isomerase, found in Flavobacterium psychrophilum (strain ATCC 49511 / DSM 21280 / CIP 103535 / JIP02/86).